A 273-amino-acid chain; its full sequence is 3-methyl-2-oxobutanoate hydroxymethyltransferase 3 (273 aa).

Mg(2+)-binding residues include D49 and D88. Residues 49–50, D88, and K118 each bind 3-methyl-2-oxobutanoate; that span reads DS. Residue E120 participates in Mg(2+) binding. E187 (proton acceptor) is an active-site residue.

Belongs to the PanB family. As to quaternary structure, homodecamer; pentamer of dimers. Requires Mg(2+) as cofactor.

Its subcellular location is the cytoplasm. It catalyses the reaction 3-methyl-2-oxobutanoate + (6R)-5,10-methylene-5,6,7,8-tetrahydrofolate + H2O = 2-dehydropantoate + (6S)-5,6,7,8-tetrahydrofolate. It functions in the pathway cofactor biosynthesis; (R)-pantothenate biosynthesis; (R)-pantoate from 3-methyl-2-oxobutanoate: step 1/2. In terms of biological role, catalyzes the reversible reaction in which hydroxymethyl group from 5,10-methylenetetrahydrofolate is transferred onto alpha-ketoisovalerate to form ketopantoate. In Bradyrhizobium diazoefficiens (strain JCM 10833 / BCRC 13528 / IAM 13628 / NBRC 14792 / USDA 110), this protein is 3-methyl-2-oxobutanoate hydroxymethyltransferase 3.